The sequence spans 319 residues: Cell division protein FtsQ (319 aa).

The tract at residues 1-53 (MDSREDMVPDVLLEAPNPRRRQSADTSTERPTRPARREQGYARVTPRGERMGN) is disordered. Residues 1–70 (MDSREDMVPD…PDFFAWFDPR (70 aa)) are Cytoplasmic-facing. A compositionally biased stretch (basic and acidic residues) spans 27–52 (STERPTRPARREQGYARVTPRGERMG). The chain crosses the membrane as a helical span at residues 71-87 (WLWVPLMVCLAVGGYWA). Residues 88-319 (YEPLEKLLER…NATRNAPTHP (232 aa)) lie on the Periplasmic side of the membrane. The POTRA domain maps to 97-166 (RPFKSVVVEG…DTLVVKIAEQ (70 aa)).

Belongs to the FtsQ/DivIB family. FtsQ subfamily. As to quaternary structure, part of a complex composed of FtsB, FtsL and FtsQ.

Its subcellular location is the cell inner membrane. Essential cell division protein. May link together the upstream cell division proteins, which are predominantly cytoplasmic, with the downstream cell division proteins, which are predominantly periplasmic. May control correct divisome assembly. This Cellvibrio japonicus (strain Ueda107) (Pseudomonas fluorescens subsp. cellulosa) protein is Cell division protein FtsQ.